Consider the following 406-residue polypeptide: Arginine deiminase (406 aa).

Catalysis depends on C396, which acts as the Amidino-cysteine intermediate.

Belongs to the arginine deiminase family.

Its subcellular location is the cytoplasm. It carries out the reaction L-arginine + H2O = L-citrulline + NH4(+). The protein operates within amino-acid degradation; L-arginine degradation via ADI pathway; carbamoyl phosphate from L-arginine: step 1/2. The protein is Arginine deiminase of Vibrio campbellii (strain ATCC BAA-1116).